Consider the following 312-residue polypeptide: tRNA uridine(34) hydroxylase (312 aa).

Positions 123 to 217 constitute a Rhodanese domain; that stretch reads SDPEVLLIDT…YLEEVPQEQS (95 aa). The Cysteine persulfide intermediate role is filled by Cys177. Residues 282-293 show a composition bias toward basic and acidic residues; it reads ARERQKQIELAR. Residues 282–312 are disordered; it reads ARERQKQIELARQRNQPHPLGRDPRQSTLEN.

Belongs to the TrhO family.

The enzyme catalyses uridine(34) in tRNA + AH2 + O2 = 5-hydroxyuridine(34) in tRNA + A + H2O. Catalyzes oxygen-dependent 5-hydroxyuridine (ho5U) modification at position 34 in tRNAs. The sequence is that of tRNA uridine(34) hydroxylase from Pseudomonas aeruginosa (strain UCBPP-PA14).